The primary structure comprises 559 residues: Protochlorophyllide-dependent translocon component 52, chloroplastic (559 aa).

Residues 1 to 55 constitute a chloroplast transit peptide; it reads MEAALAACALPSLRILNTKPRFRCSFSNPSLPISPNSLITRKSSRFTTAVSSPPS. The interval 44 to 70 is disordered; sequence SRFTTAVSSPPSSSAATSTNSPPEPEA. Residues 47-64 show a composition bias toward low complexity; sequence TTAVSSPPSSSAATSTNS. The Rieske domain occupies 85-195; that stretch reads WYPVMPICDL…STVQHEIIWF (111 aa). 4 residues coordinate [2Fe-2S] cluster: Cys127, His129, Cys147, and His150. Fe cation is bound by residues His248 and His253. Positions 483-486 match the Redox-active motif motif; that stretch reads CSSC. 2 helical membrane passes run 493–513 and 525–545; these read LNAL…VMAV and IAVL…SHFI.

[2Fe-2S] cluster is required as a cofactor.

Its subcellular location is the plastid. It localises to the chloroplast inner membrane. The catalysed reaction is protochlorophyllide a + 4 reduced [2Fe-2S]-[ferredoxin] + 2 O2 + 5 H(+) = protochlorophyllide b + 4 oxidized [2Fe-2S]-[ferredoxin] + 3 H2O. Its activity is regulated as follows. Down-regulated by light. Part of a translocon most abundantly expressed in etiolated plants and involved in the protochlorophyllide-dependent import of the precursor NADPH:protochlorophyllide oxidoreductase A (pPORA). The polypeptide is Protochlorophyllide-dependent translocon component 52, chloroplastic (Arabidopsis thaliana (Mouse-ear cress)).